We begin with the raw amino-acid sequence, 316 residues long: Pantothenate kinase (316 aa).

Gly95–Ser102 is an ATP binding site.

Belongs to the prokaryotic pantothenate kinase family.

Its subcellular location is the cytoplasm. It carries out the reaction (R)-pantothenate + ATP = (R)-4'-phosphopantothenate + ADP + H(+). It functions in the pathway cofactor biosynthesis; coenzyme A biosynthesis; CoA from (R)-pantothenate: step 1/5. This chain is Pantothenate kinase, found in Enterobacter sp. (strain 638).